A 166-amino-acid chain; its full sequence is UPF0561 protein C2orf68 homolog (166 aa).

Residues 36 to 49 (RDDYDKKVKQAAKE) are compositionally biased toward basic and acidic residues. The segment at 36-108 (RDDYDKKVKQ…EPEPPGHQLF (73 aa)) is disordered.

Belongs to the UPF0561 family.

This chain is UPF0561 protein C2orf68 homolog, found in Bos taurus (Bovine).